Consider the following 200-residue polypeptide: Ciliary neurotrophic factor (200 aa).

Belongs to the CNTF family. In terms of tissue distribution, nervous system.

The protein resides in the cytoplasm. In terms of biological role, CNTF is a survival factor for various neuronal cell types. Seems to prevent the degeneration of motor axons after axotomy. The chain is Ciliary neurotrophic factor (CNTF) from Sus scrofa (Pig).